Reading from the N-terminus, the 142-residue chain is Hemoglobin subunit alpha-A (142 aa).

A Globin domain is found at 2–142; the sequence is VLSGSDKTNV…VGNVLTAKYR (141 aa). O2 is bound at residue His59. Position 88 (His88) interacts with heme b.

It belongs to the globin family. In terms of assembly, heterotetramer of two alpha chains and two beta chains. In terms of tissue distribution, red blood cells.

Its function is as follows. Involved in oxygen transport from the lung to the various peripheral tissues. The sequence is that of Hemoglobin subunit alpha-A (HBAA) from Ara ararauna (Blue-and-yellow macaw).